Here is a 508-residue protein sequence, read N- to C-terminus: Zinc finger CCCH-type with G patch domain-containing protein (508 aa).

The C3H1-type zinc-finger motif lies at 154-177 (PCNYYLEGECRFDETRCRYSHGAL). Positions 253 to 279 (DDELSSDSEETNETDGSDAANESDMDD) are disordered. The 47-residue stretch at 309–355 (TRGIGSKLMASMGYIHGTGLGSDGRGIVTPVSAQILPQGRSLDACME) folds into the G-patch domain. Polar residues predominate over residues 486–495 (QAQESSLSKE). Positions 486–508 (QAQESSLSKEQQTRKSKNKMFEF) are disordered. Basic residues predominate over residues 499 to 508 (RKSKNKMFEF).

It localises to the nucleus. Transcription repressor. This chain is Zinc finger CCCH-type with G patch domain-containing protein, found in Drosophila virilis (Fruit fly).